Here is a 557-residue protein sequence, read N- to C-terminus: Arginine--tRNA ligase (557 aa).

The 'HIGH' region signature appears at 132-142 (ANPTGLLHMGN).

Belongs to the class-I aminoacyl-tRNA synthetase family. In terms of assembly, monomer.

It localises to the cytoplasm. The enzyme catalyses tRNA(Arg) + L-arginine + ATP = L-arginyl-tRNA(Arg) + AMP + diphosphate. This chain is Arginine--tRNA ligase, found in Carboxydothermus hydrogenoformans (strain ATCC BAA-161 / DSM 6008 / Z-2901).